We begin with the raw amino-acid sequence, 496 residues long: Protein TOO MANY MOUTHS (496 aa).

The first 23 residues, 1–23, serve as a signal peptide directing secretion; that stretch reads MARYEFFRQIFIVLSIVSPLVRS. Residues 24–473 are Extracellular-facing; that stretch reads FTVITSDSTA…ATDVSSTSKS (450 aa). 10 LRR repeats span residues 158 to 182, 183 to 208, 210 to 228, 229 to 252, 254 to 276, 277 to 300, 302 to 325, 326 to 350, 351 to 373, and 375 to 401; these read GSSLQTLVLRENGFLGPIPDELGNL, TNLKVLDLHKNHLNGSIPLSFNRFSG, RSLDLSGNRLTGSIPGFVL, PALSVLDLNQNLLTGPVPPTLTSC, SLIKIDLSRNRVTGPIPESINRL, NQLVLLDLSYNRLSGPFPSSLQGL, SLQALMLKGNTKFSTTIPENAFKG, LKNLMILVLSNTNIQGSIPKSLTRL, NSLRVLHLEGNNLTGEIPLEFRD, and KHLSELRLNDNSLTGPVPFERDTVWRM. N-linked (GlcNAc...) asparagine glycosylation is found at N181 and N196. N-linked (GlcNAc...) asparagine glycosylation occurs at N362. Positions 438–464 are disordered; it reads AETSRPAPSGTVQHLSREEDGALPDGA. Residues 474–494 form a helical membrane-spanning segment; the sequence is LGFSYLSAFFLVFPNFIFMLI. The Cytoplasmic portion of the chain corresponds to 495–496; it reads SS.

The protein belongs to the RLP family. In terms of assembly, forms heterodimer with ERECTA or ERL1 through their extracellular domains. Not able to form homodimer. Interacts with EPF2 but not with EPF1. Interacts with SERK1, SERK2, SERK3/BAK1 and SERK4. Interacts with EPFL9/STOMAGEN. In epidermal cells of developing shoots and leaves, but not in roots. Expressed in the stomatal cell lineage in the developing epidermis. Accumulates strongly in meristemoid mother cells (MMC) and meristemoids, somewhat less in meristemoid sister cells (stomatal-lineage ground cells, SLGC), and is barely detected in pavement cells.

The protein resides in the cell membrane. Functionally, promotes cell fate progression in stomatal development. In leaves, needed to correctly orient spacing divisions, to limit the number of asymmetric divisions in neighbor cells, and to promote the asymmetric (amplifying) divisions of meristemoids. In stems, promotes the conversion of meristemoids into guard mother cells (GMC). Positively regulates CAPRICE (CPC) expression in differentiating stomaless-forming cell files. Forms constitutive complexes with ERECTA and ERL1 involved in the recognition of the stomatal regulatory peptides EPF1, EPF2 and EPFL9/STOMAGEN. Modulates the activity of the ligand-receptor pairs EPF2-ERECTA and EPF1-ERL1 in stomatal development. Functions in a combinatorial specific manner with the ERECTA-family (ERf) receptor kinases in the regulation of the immune response. This Arabidopsis thaliana (Mouse-ear cress) protein is Protein TOO MANY MOUTHS.